The primary structure comprises 339 residues: Dihydroorotase (339 aa).

Residues H12 and H14 each coordinate Zn(2+). Residues 14 to 16 (HVR) and N40 contribute to the substrate site. 4 residues coordinate Zn(2+): K94, H133, H167, and D239. Position 94 is an N6-carboxylysine (K94). H133 contributes to the substrate binding site. D239 is an active-site residue. Substrate-binding residues include H243 and A255.

This sequence belongs to the metallo-dependent hydrolases superfamily. DHOase family. Class II DHOase subfamily. As to quaternary structure, homodimer. It depends on Zn(2+) as a cofactor.

The catalysed reaction is (S)-dihydroorotate + H2O = N-carbamoyl-L-aspartate + H(+). It functions in the pathway pyrimidine metabolism; UMP biosynthesis via de novo pathway; (S)-dihydroorotate from bicarbonate: step 3/3. In terms of biological role, catalyzes the reversible cyclization of carbamoyl aspartate to dihydroorotate. This Helicobacter pylori (strain J99 / ATCC 700824) (Campylobacter pylori J99) protein is Dihydroorotase.